Consider the following 749-residue polypeptide: Pectate disaccharide-lyase (749 aa).

The N-terminal stretch at Met-1–Ala-26 is a signal peptide. 4 residues coordinate Ca(2+): Asp-538, Asp-562, Asp-563, and Asp-566. Residue Lys-595 is the Proton acceptor of the active site.

This sequence belongs to the polysaccharide lyase 9 family. The cofactor is Ca(2+).

It is found in the secreted. It carries out the reaction [(1-&gt;4)-alpha-D-galacturonosyl](n) = 4-(4-deoxy-alpha-D-galact-4-enuronosyl)-D-galacturonate + [(1-&gt;4)-alpha-D-galacturonosyl](n-2). Its activity is regulated as follows. Activity on pectate is nearly completely inhibited by ethyleneglycol-bis-(P-aminoethyl ether) N,N'-tetraacetic acid (EGTA), EDTA or nitrilotriacetic acid. Activity is specifically restored by the addition of Ca(2+). Its function is as follows. Exo-cleaving lyase that catalyzes the digestion of pectate. Contributes to pectate catabolism but not to bacterial virulence. In vitro can also use citrus pectin and highly methyl-esterified Link pectin as substrates. The polypeptide is Pectate disaccharide-lyase (Dickeya chrysanthemi (Pectobacterium chrysanthemi)).